Here is a 1125-residue protein sequence, read N- to C-terminus: Probable phospholipid-transporting ATPase IIB (1125 aa).

Residues 1 to 131 (MADGIPLNPV…IKNQKYNIVT (131 aa)) are Cytoplasmic-facing. Residues 132 to 152 (FVPGVLYQQFKFFLNLYFLVV) traverse the membrane as a helical segment. The Extracellular segment spans residues 153-161 (ACSQFVPSL). The chain crosses the membrane as a helical span at residues 162–182 (KIGYLYTYWAPLGFVLAVTMV). At 183-369 (REAVDEVRRC…LDLELNRLTK (187 aa)) the chain is on the cytoplasmic side. A helical transmembrane segment spans residues 370 to 390 (ALFLAQVVLSVVMVALQGFLG). Over 391 to 395 (PWFRN) the chain is Extracellular. A helical transmembrane segment spans residues 396 to 415 (LFRFVVLFSYIIPISLRVNL). Over 416-928 (DMGKSAYGWM…ALGQFVMHRG (513 aa)) the chain is Cytoplasmic. Asp-455 functions as the 4-aspartylphosphate intermediate in the catalytic mechanism. Positions 455, 456, and 457 each coordinate ATP. Residue Asp-455 participates in Mg(2+) binding. Mg(2+) is bound at residue Thr-457. Residues 500–511 (QSNGSSASSTPS) show a composition bias toward low complexity. 2 disordered regions span residues 500 to 525 (QSNG…RKSV) and 552 to 574 (GANA…RTYQ). The span at 558 to 567 (ESTEADQDFS) shows a compositional bias: acidic residues. Residues Glu-580, Phe-622, Lys-627, Lys-646, Arg-675, Thr-676, Thr-755, Gly-756, Asp-757, Arg-837, and Lys-843 each contribute to the ATP site. Residue Asp-863 coordinates Mg(2+). ATP is bound by residues Asn-866 and Asp-867. Residue Asp-867 coordinates Mg(2+). The chain crosses the membrane as a helical span at residues 929-949 (MIISTMQAVFSSIFYFASVPL). The Extracellular portion of the chain corresponds to 950–951 (YQ). The helical transmembrane segment at 952-972 (GFLMVGYATIYTMFPVFSLVL) threads the bilayer. Residues 973–1001 (DQDVKPEMALLYPELYKDLTKGRSLSFKT) lie on the Cytoplasmic side of the membrane. Residues 1002–1022 (FLIWVLISIYQGGILMYGALV) traverse the membrane as a helical segment. The Extracellular portion of the chain corresponds to 1023–1030 (LFDQEFVH). Residues 1031 to 1051 (VVAISFTALILTELLMVALTI) traverse the membrane as a helical segment. Over 1052 to 1055 (RTWH) the chain is Cytoplasmic. A helical membrane pass occupies residues 1056 to 1076 (WLMVVAQLISLACYLASLAFL). Residues 1077–1088 (NEYFDLSFITTR) are Extracellular-facing. The chain crosses the membrane as a helical span at residues 1089–1109 (VFLWKVCVITLVSCLPLYIIK). Residues 1110–1125 (YLKRKFSPPSYSKLSS) lie on the Cytoplasmic side of the membrane.

The protein belongs to the cation transport ATPase (P-type) (TC 3.A.3) family. Type IV subfamily. Requires Mg(2+) as cofactor.

It is found in the golgi apparatus. Its subcellular location is the trans-Golgi network membrane. It carries out the reaction ATP + H2O + phospholipidSide 1 = ADP + phosphate + phospholipidSide 2.. The chain is Probable phospholipid-transporting ATPase IIB (atp9b) from Danio rerio (Zebrafish).